The chain runs to 59 residues: Protein B3 (59 aa).

The polypeptide is Protein B3 (B3) (Homo sapiens (Human)).